The following is a 541-amino-acid chain: Formimidoyltransferase-cyclodeaminase (541 aa).

The interval Met1–Phe181 is formiminotransferase N-subdomain. His82 serves as the catalytic For formimidoyltransferase activity. Gly163–Gly172 provides a ligand contact to folate. The interval Leu182 to Val326 is formiminotransferase C-subdomain. The linker stretch occupies residues Pro327–Ser334. The tract at residues Leu335–Glu541 is cyclodeaminase/cyclohydrolase. The active-site For cyclodeaminase activity is Asp412. Ser520 carries the phosphoserine modification.

In the C-terminal section; belongs to the cyclodeaminase/cyclohydrolase family. This sequence in the N-terminal section; belongs to the formiminotransferase family. Homooctamer, including four polyglutamate binding sites. The subunits are arranged as a tetramer of dimers, and form a planar ring-shaped structure.

Its subcellular location is the cytoplasm. The protein localises to the cytoskeleton. It is found in the microtubule organizing center. The protein resides in the centrosome. It localises to the centriole. Its subcellular location is the golgi apparatus. It catalyses the reaction 5-formimidoyltetrahydrofolate + L-glutamate = N-formimidoyl-L-glutamate + (6S)-5,6,7,8-tetrahydrofolate. It carries out the reaction (6S)-5-formyl-5,6,7,8-tetrahydrofolate + L-glutamate = N-formyl-L-glutamate + (6S)-5,6,7,8-tetrahydrofolate + H(+). The catalysed reaction is 5-formimidoyltetrahydrofolate + 2 H(+) = (6R)-5,10-methenyltetrahydrofolate + NH4(+). The protein operates within amino-acid degradation; L-histidine degradation into L-glutamate; L-glutamate from N-formimidoyl-L-glutamate (transferase route): step 1/1. It functions in the pathway one-carbon metabolism; tetrahydrofolate interconversion. Folate-dependent enzyme, that displays both transferase and deaminase activity. Serves to channel one-carbon units from formiminoglutamate to the folate pool. Its function is as follows. Binds and promotes bundling of vimentin filaments originating from the Golgi. This Mus musculus (Mouse) protein is Formimidoyltransferase-cyclodeaminase (Ftcd).